The sequence spans 582 residues: Probable inorganic phosphate transporter 1-9 (582 aa).

Residues 1-23 (MAPRIRVLAALDQARTQYYHFKA) lie on the Cytoplasmic side of the membrane. A helical membrane pass occupies residues 24-44 (IVIAGMGLFTDSYDLFCISPV). At 45 to 75 (MKIFGRVYYAPSGSVDGSGSGPGVTPPAVVS) the chain is on the extracellular side. The helical transmembrane segment at 76–96 (ATVGVALLGAVAGNVVFGALG) threads the bilayer. Residues 97–103 (DRVGRRR) are Cytoplasmic-facing. Residues 104-124 (VYGACLLLMVCSSVGSGLSVC) traverse the membrane as a helical segment. Residues 125–130 (RTRRCA) lie on the Extracellular side of the membrane. Residues 131–151 (LASLCFFRFLLGVGVGGDYPL) traverse the membrane as a helical segment. Over 152–165 (SATIMSEFANRRTR) the chain is Cytoplasmic. The chain crosses the membrane as a helical span at residues 166–186 (GAFIAAVFSMQGFGILVSSAV). Topologically, residues 187 to 210 (TMAVAAAFDHYTGYPAPLDTPECA) are extracellular. Residues 211–231 (DLAWRIILMAGAVPAALTYYW) traverse the membrane as a helical segment. The Cytoplasmic portion of the chain corresponds to 232–307 (RMSMPETARY…RRFVRQHGRD (76 aa)). The chain crosses the membrane as a helical span at residues 308–328 (LFACAAAWFLLDIPYYSSTLF). At 329–354 (QSQIYRPWFPPAAKVNAFQEAFNVAK) the chain is on the extracellular side. The helical transmembrane segment at 355 to 375 (FQAVIAVASTIPGYFAAMLLI) threads the bilayer. Residues 376 to 385 (ERAGRRRLQM) lie on the Cytoplasmic side of the membrane. Residues 386–406 (AGFLLMAVFLFALAGPYDGYW) form a helical membrane-spanning segment. Residues 407 to 415 (RDHAKTAGY) are Extracellular-facing. Residues 416-436 (IVLYSLTFFSANLGPNTTTFI) traverse the membrane as a helical segment. Residues 437–451 (LPAELFPARFRSTCH) lie on the Cytoplasmic side of the membrane. The helical transmembrane segment at 452-472 (GLSGAAGKLGALVGSIGFLWA) threads the bilayer. Topologically, residues 473 to 485 (SQQKDGAAAGHLP) are extracellular. The chain crosses the membrane as a helical span at residues 486 to 506 (GIGMMYALFVLGGICLLGLAL). Over 507–582 (TYAFTPETMT…SPILPHRMSL (76 aa)) the chain is Cytoplasmic. A disordered region spans residues 519–541 (LEENESSVQAQSQVGDGGSDAGN).

The protein belongs to the major facilitator superfamily. Phosphate:H(+) symporter (TC 2.A.1.9) family. Expressed at low levels in roots.

It is found in the membrane. Functionally, high-affinity transporter for external inorganic phosphate. In Oryza sativa subsp. japonica (Rice), this protein is Probable inorganic phosphate transporter 1-9 (PHT1-9).